A 1148-amino-acid chain; its full sequence is Minor outer capsid protein P2 (1148 aa).

The region spanning 929–1148 is the PPPDE domain; that stretch reads ENNAANFFER…LYIQSIYDAL (220 aa). Catalysis depends on residues His953 and Cys1111.

This sequence belongs to the phytoreovirus minor outer capsid protein P2 family. As to quaternary structure, interacts with host ent-kaurene oxidases OSKO1, OSKO2, OSKOL4 and OSKOL5; this interaction.

The protein resides in the virion. It localises to the host cytoplasm. Its function is as follows. Minor capsid protein present in the outer capsid, which is required for adsorption of the virus onto host insect cells (Potential). Could play a role in the host plant virus induced dwarfism. The sequence is that of Minor outer capsid protein P2 from Rice dwarf virus (isolate O) (RDV).